A 270-amino-acid chain; its full sequence is Pantoate kinase (270 aa).

The protein belongs to the GHMP kinase family. PoK subfamily.

It catalyses the reaction (R)-pantoate + ATP = (R)-4-phosphopantoate + ADP + H(+). The protein operates within cofactor biosynthesis; coenzyme A biosynthesis. Its function is as follows. Phosphorylates (R)-pantoate to form (R)-4-phosphopantoate in the CoA biosynthesis pathway. In Methanocaldococcus jannaschii (strain ATCC 43067 / DSM 2661 / JAL-1 / JCM 10045 / NBRC 100440) (Methanococcus jannaschii), this protein is Pantoate kinase.